Consider the following 190-residue polypeptide: dTTP/UTP pyrophosphatase (190 aa).

Asp-70 (proton acceptor) is an active-site residue.

The protein belongs to the Maf family. YhdE subfamily. A divalent metal cation is required as a cofactor.

The protein resides in the cytoplasm. The catalysed reaction is dTTP + H2O = dTMP + diphosphate + H(+). It catalyses the reaction UTP + H2O = UMP + diphosphate + H(+). In terms of biological role, nucleoside triphosphate pyrophosphatase that hydrolyzes dTTP and UTP. May have a dual role in cell division arrest and in preventing the incorporation of modified nucleotides into cellular nucleic acids. The polypeptide is dTTP/UTP pyrophosphatase (Gloeobacter violaceus (strain ATCC 29082 / PCC 7421)).